The sequence spans 309 residues: MKTRSKLAAGFLTLMSVATLAACSGKTSNGTNVVTMKGDTITVSDFYDQVKTSKAAQQSMLTLILSRVFDTQYGDKVSDKKVSEAYNKTAKGYGNSFSSALSQAGLTPEGYKQQIRTTMLVEYAVKEAAKKELTEANYKEAYKNYTPETSVQVIKLDAEDKAKSVLKDVKADGADFAKIAKEKTTATDKKVEYKFDSAGTSLPKEVMSAAFKLDKNGVSDVVSTVDSTTYKTSYYIIKVTDKTEKKSDWKSYKNRLKEVILKDKTSDRSFQNKVISKALEKANVKIKDKAFAGILSQYATTSGSSSLKK.

A signal peptide spans M1–A22. C23 is lipidated: N-palmitoyl cysteine. A lipid anchor (S-diacylglycerol cysteine) is attached at C23. The 96-residue stretch at T146–D241 folds into the PpiC domain.

It belongs to the PrsA family.

It is found in the cell membrane. It catalyses the reaction [protein]-peptidylproline (omega=180) = [protein]-peptidylproline (omega=0). Its function is as follows. Plays a major role in protein secretion by helping the post-translocational extracellular folding of several secreted proteins. The sequence is that of Foldase protein PrsA from Streptococcus agalactiae serotype III (strain NEM316).